Here is a 167-residue protein sequence, read N- to C-terminus: MIRIIGVDPGLRRTGWGIIETLGNSLRFIASGTITSDGDMDLASRLCQLHDGLAEVVHSYQPHEAAVEQTFVNKDATATLKLGQARGIAMLVPARAGLRVAEYAPNAVKKAVIGVGHGEKQQIHMMLKVLMPKAEFKGNDAADALAIAICHAHNRQAITSRLAALAG.

Residues aspartate 8, glutamate 68, and aspartate 140 contribute to the active site. Residues aspartate 8, glutamate 68, and aspartate 140 each coordinate Mg(2+).

The protein belongs to the RuvC family. In terms of assembly, homodimer which binds Holliday junction (HJ) DNA. The HJ becomes 2-fold symmetrical on binding to RuvC with unstacked arms; it has a different conformation from HJ DNA in complex with RuvA. In the full resolvosome a probable DNA-RuvA(4)-RuvB(12)-RuvC(2) complex forms which resolves the HJ. Mg(2+) is required as a cofactor.

The protein localises to the cytoplasm. The catalysed reaction is Endonucleolytic cleavage at a junction such as a reciprocal single-stranded crossover between two homologous DNA duplexes (Holliday junction).. Its function is as follows. The RuvA-RuvB-RuvC complex processes Holliday junction (HJ) DNA during genetic recombination and DNA repair. Endonuclease that resolves HJ intermediates. Cleaves cruciform DNA by making single-stranded nicks across the HJ at symmetrical positions within the homologous arms, yielding a 5'-phosphate and a 3'-hydroxyl group; requires a central core of homology in the junction. The consensus cleavage sequence is 5'-(A/T)TT(C/G)-3'. Cleavage occurs on the 3'-side of the TT dinucleotide at the point of strand exchange. HJ branch migration catalyzed by RuvA-RuvB allows RuvC to scan DNA until it finds its consensus sequence, where it cleaves and resolves the cruciform DNA. The polypeptide is Crossover junction endodeoxyribonuclease RuvC (Sinorhizobium medicae (strain WSM419) (Ensifer medicae)).